Consider the following 256-residue polypeptide: Alcohol dehydrogenase (256 aa).

Residue 12-35 (FVAGLGGIGLDTSKELVKRDLKNL) participates in NAD(+) binding. Ser-140 provides a ligand contact to substrate. The Proton acceptor role is filled by Tyr-153.

Belongs to the short-chain dehydrogenases/reductases (SDR) family. Homodimer.

The enzyme catalyses a primary alcohol + NAD(+) = an aldehyde + NADH + H(+). It catalyses the reaction a secondary alcohol + NAD(+) = a ketone + NADH + H(+). This chain is Alcohol dehydrogenase (Adh), found in Drosophila teissieri (Fruit fly).